The following is a 66-amino-acid chain: Ribosome biogenesis protein Nop10 (66 aa).

It belongs to the NOP10 family.

In terms of biological role, involved in ribosome biogenesis; more specifically in 18S rRNA pseudouridylation and in cleavage of pre-rRNA. This chain is Ribosome biogenesis protein Nop10, found in Staphylothermus marinus (strain ATCC 43588 / DSM 3639 / JCM 9404 / F1).